A 122-amino-acid polypeptide reads, in one-letter code: Large ribosomal subunit protein bL12 (122 aa).

This sequence belongs to the bacterial ribosomal protein bL12 family. Homodimer. Part of the ribosomal stalk of the 50S ribosomal subunit. Forms a multimeric L10(L12)X complex, where L10 forms an elongated spine to which 2 to 4 L12 dimers bind in a sequential fashion. Binds GTP-bound translation factors.

Functionally, forms part of the ribosomal stalk which helps the ribosome interact with GTP-bound translation factors. Is thus essential for accurate translation. This Enterococcus faecalis (strain ATCC 700802 / V583) protein is Large ribosomal subunit protein bL12.